The chain runs to 223 residues: Pre-protein VI (223 aa).

Positions 1-28 are excised as a propeptide; the sequence is MDYAALSPHLGGWALRDHHIGDSSLRGG. The interval 29-53 is amphipathic alpha-helix essential for membrane lytic activity; it reads AINWGNLGSRITSALNSTGRWLYNT. Positions 31-52 are involved in endosomal membrane lysis; that stretch reads NWGNLGSRITSALNSTGRWLYN. The segment at 47–73 is interaction with hexon protein; it reads GRWLYNTGNRFVHSNTFNQIKQGIQDS. A Nuclear export signal motif is present at residues 66–75; it reads IKQGIQDSGV. 2 disordered regions span residues 136–155 and 166–203; these read EPPA…PTTR and PPVT…GQWR. Residues 138-151 are compositionally biased toward pro residues; sequence PAAPAAPAPAPPLV. The segment covering 166–182 has biased composition (low complexity); that stretch reads PPVTSSAPAVPVDVPTT. A compositionally biased stretch (basic residues) spans 189 to 198; it reads PPKRRRKRAR. Residues 204 to 215 carry the Nuclear export signal motif; sequence ARLDSLSGTGVA. Positions 206–212 are interaction with hexon protein; the sequence is LDSLSGT. Residues 213 to 223 are binds to importin alpha/beta, involved in hexon nuclear import; that stretch reads GVATATRRMCY.

Belongs to the adenoviridae protein VI family. Interacts with hexon protein; this interaction allows nuclear import of hexon trimers and possibly pre-capsid assembly. Interacts (via C-terminal NLS) with importin alpha/beta. As to quaternary structure, interacts (via PPxY motif) with host NEDD4 ubiquitine ligase; this interaction might play a role in virus intracellular transport during entry. Part of a complex composed of the core-capsid bridging protein, the endosome lysis protein VI and the hexon-linking protein VIII; these interactions bridge the virus core to the capsid. Interacts with peripentonal hexons; this interaction stabilizes the capsid by gluing two peripentonal hexons together and joining them with an adjacent group-of-nine hexon. In terms of assembly, heterodimer with the viral protease; disulfide-linked. Interacts with the viral protease. Ubiquitinated by Nedd4 following partial capsid disassembly; which might play a role in intracellular virus movement during entry. Post-translationally, contains the major nuclear import and export signals. Proteolytically removed during virion maturation. The processing of the C-terminus turns the precursor into a mature viral structural protein and abrogates its ability to promote hexon import and act as a potential chaperone protein.

The protein localises to the host nucleus. It is found in the host cytoplasm. The protein resides in the virion. In terms of biological role, during virus assembly, promotes hexon trimers nuclear import through nuclear pore complexes via an importin alpha/beta-dependent mechanism. By analogy to herpesviruses capsid assembly, might act as a chaperone to promote the formation of the icosahedral capsid. Structural component of the virion that provides increased stability to the particle shell through its interaction with the core-capsid bridging protein and the hexon-linking protein VIII. Fibers shedding during virus entry into host cell allows the endosome lysis protein to be exposed as a membrane-lytic peptide. Exhibits pH-independent membrane fragmentation activity and probably mediates viral rapid escape from host endosome via organellar membrane lysis. It is not clear if it then remains partially associated with the capsid and involved in the intracellular microtubule-dependent transport of capsid to the nucleus, or if it is lost during endosomal penetration. Functionally, cofactor that activates the viral protease. Binds to viral protease in a 1:1 ratio. This is Pre-protein VI from Fowl adenovirus A serotype 1 (strain CELO / Phelps) (FAdV-1).